A 514-amino-acid polypeptide reads, in one-letter code: Protein farnesyltransferase subunit beta (514 aa).

The segment covering 1–13 (MRHHTKNLRRRAI) has biased composition (basic residues). The disordered stretch occupies residues 1–56 (MRHHTKNLRRRAIFLRTTPRGNMDSSSSVATSTSSSSNHRLVRSSEGSPSAGGDDI). Over residues 25 to 39 (SSSSVATSTSSSSNH) the composition is skewed to low complexity. PFTB repeat units lie at residues 180–221 (AESL…AVVG), 231–272 (RRAL…SLLN), 293–334 (FTGL…SLLG), 346–388 (IERL…PLIE), and 410–454 (REGL…SSAQ). (2E,6E)-farnesyl diphosphate is bound by residues 319–322 (HGAY) and 367–370 (RTNK). The Zn(2+) site is built by D373 and C375. 376–379 (YSHW) lines the (2E,6E)-farnesyl diphosphate pocket. Residue H442 participates in Zn(2+) binding.

The protein belongs to the protein prenyltransferase subunit beta family. Heterodimer of an alpha and a beta subunit. Interacts with RAS1 and RAS2. It depends on Zn(2+) as a cofactor. In terms of tissue distribution, highly expressed in mycelium, conidium, conidial germination, early formed appressorium and the late infection hypha.

It is found in the cytoplasm. It catalyses the reaction L-cysteinyl-[protein] + (2E,6E)-farnesyl diphosphate = S-(2E,6E)-farnesyl-L-cysteinyl-[protein] + diphosphate. Its function is as follows. Catalyzes the transfer of a farnesyl moiety from farnesyl diphosphate to a cysteine at the fourth position from the C-terminus of several proteins having the C-terminal sequence Cys-aliphatic-aliphatic-X. The beta subunit is responsible for peptide-binding. In Pyricularia oryzae (strain 70-15 / ATCC MYA-4617 / FGSC 8958) (Rice blast fungus), this protein is Protein farnesyltransferase subunit beta (RAM1).